Consider the following 480-residue polypeptide: Bifunctional protein GlmU (480 aa).

Residues 1–247 are pyrophosphorylase; that stretch reads MATPIDVVIM…AAQVAGVNSP (247 aa). UDP-N-acetyl-alpha-D-glucosamine contacts are provided by residues Lys24, Gln86, 91-92, 113-115, Gly150, Glu172, and Asn245; these read GT and SGD. Asp115 provides a ligand contact to Mg(2+). Asn245 serves as a coordination point for Mg(2+). A linker region spans residues 248 to 268; it reads VQLAELERVYQLRQATALMEQ. The segment at 269–480 is N-acetyltransferase; that stretch reads GVRLADPARF…WKRPVKVSKG (212 aa). UDP-N-acetyl-alpha-D-glucosamine is bound by residues Arg355 and Lys373. His385 serves as the catalytic Proton acceptor. Residues Tyr388 and Asn399 each coordinate UDP-N-acetyl-alpha-D-glucosamine. Acetyl-CoA-binding positions include Ala402, 408–409, Ser427, Gly445, and Arg462; that span reads NY.

In the N-terminal section; belongs to the N-acetylglucosamine-1-phosphate uridyltransferase family. The protein in the C-terminal section; belongs to the transferase hexapeptide repeat family. As to quaternary structure, homotrimer. Requires Mg(2+) as cofactor.

The protein resides in the cytoplasm. The enzyme catalyses alpha-D-glucosamine 1-phosphate + acetyl-CoA = N-acetyl-alpha-D-glucosamine 1-phosphate + CoA + H(+). It catalyses the reaction N-acetyl-alpha-D-glucosamine 1-phosphate + UTP + H(+) = UDP-N-acetyl-alpha-D-glucosamine + diphosphate. Its pathway is nucleotide-sugar biosynthesis; UDP-N-acetyl-alpha-D-glucosamine biosynthesis; N-acetyl-alpha-D-glucosamine 1-phosphate from alpha-D-glucosamine 6-phosphate (route II): step 2/2. The protein operates within nucleotide-sugar biosynthesis; UDP-N-acetyl-alpha-D-glucosamine biosynthesis; UDP-N-acetyl-alpha-D-glucosamine from N-acetyl-alpha-D-glucosamine 1-phosphate: step 1/1. It participates in bacterial outer membrane biogenesis; LPS lipid A biosynthesis. In terms of biological role, catalyzes the last two sequential reactions in the de novo biosynthetic pathway for UDP-N-acetylglucosamine (UDP-GlcNAc). The C-terminal domain catalyzes the transfer of acetyl group from acetyl coenzyme A to glucosamine-1-phosphate (GlcN-1-P) to produce N-acetylglucosamine-1-phosphate (GlcNAc-1-P), which is converted into UDP-GlcNAc by the transfer of uridine 5-monophosphate (from uridine 5-triphosphate), a reaction catalyzed by the N-terminal domain. The protein is Bifunctional protein GlmU of Polaromonas sp. (strain JS666 / ATCC BAA-500).